A 284-amino-acid chain; its full sequence is Trimeric intracellular cation channel type B (284 aa).

Residues 1–15 (MESFSELSLQFSQLS) are Lumenal-facing. A helical transmembrane segment spans residues 16–32 (MFPFFETAHYLTSVMSA). At 33–44 (REQAGAVDVASR) the chain is on the cytoplasmic side. A helical transmembrane segment spans residues 45-68 (SPLASWFSSMLYCFGGGILSSILL). The Lumenal portion of the chain corresponds to 69–79 (AEPPVGILSNT). A helical transmembrane segment spans residues 80–99 (TSIILASAVWYMVYYFPYDL). The Cytoplasmic segment spans residues 100 to 102 (FYN). Residues 103–121 (CFFFLPIRLILAGMKEVTR) traverse the membrane as a helical segment. K117 and R121 together coordinate a 1,2-diacyl-sn-glycero-3-phospho-(1D-myo-inositol-4,5-bisphosphate). The Lumenal portion of the chain corresponds to 122-139 (TWKILSGVAHAHSHYKDA). A helical membrane pass occupies residues 140–157 (MLVMITIGWARGAGGGLI). At 158–178 (SNFEQLVRGVWKPESNEFLKM) the chain is on the cytoplasmic side. A helical membrane pass occupies residues 179–196 (SYPVKVTLIGAVLFTLQH). Over 197–204 (GQYLPISR) the chain is Lumenal. Residues 205–225 (HNLMFIYTLFLILIKVTMMLT) traverse the membrane as a helical segment. At 226-284 (RSTASPFLPLETSLQHILFSRQQIPAEVRESPSSSGDKGKPSKKTLDKDSGEQDNKKDN) the chain is on the cytoplasmic side. Positions 250 to 284 (PAEVRESPSSSGDKGKPSKKTLDKDSGEQDNKKDN) are disordered. Basic and acidic residues predominate over residues 262–284 (DKGKPSKKTLDKDSGEQDNKKDN).

Belongs to the TMEM38 family. As to quaternary structure, homotrimer; conformation seems to be controled by binding to diacylglycerol (DAG).

The protein resides in the endoplasmic reticulum membrane. It carries out the reaction K(+)(in) = K(+)(out). Its activity is regulated as follows. Channel activity is activated by increased cytosolic Ca(2+) levels and blocked by luminal high Ca(2+) levels. Functionally, intracellular monovalent cation channel required for maintenance of rapid intracellular calcium release. Acts as a potassium counter-ion channel that functions in synchronization with calcium release from intracellular stores. Activated by increased cytosolic Ca(2+) levels. In Xenopus tropicalis (Western clawed frog), this protein is Trimeric intracellular cation channel type B (tmem38b).